Consider the following 379-residue polypeptide: Alcohol dehydrogenase 1 (379 aa).

Zn(2+) contacts are provided by Cys-47, Thr-49, His-69, Cys-99, Cys-102, Cys-105, Cys-113, and Cys-177. Residues Thr-49 and His-69 each coordinate an alcohol. Thr-49 is a binding site for NAD(+). Residues 202–207 (GLGAVG), Asp-226, Arg-231, Thr-272, Val-295, 295–297 (VGV), Phe-322, and Arg-372 each bind NAD(+).

The protein belongs to the zinc-containing alcohol dehydrogenase family. As to quaternary structure, homodimer. Zn(2+) is required as a cofactor.

The protein localises to the cytoplasm. The catalysed reaction is a primary alcohol + NAD(+) = an aldehyde + NADH + H(+). It carries out the reaction a secondary alcohol + NAD(+) = a ketone + NADH + H(+). This is Alcohol dehydrogenase 1 (ADH1) from Zea mays (Maize).